A 308-amino-acid chain; its full sequence is Probable manganese-dependent inorganic pyrophosphatase (308 aa).

6 residues coordinate Mn(2+): His9, Asp13, Asp15, Asp75, His97, and Asp149.

The protein belongs to the PPase class C family. Requires Mn(2+) as cofactor.

It is found in the cytoplasm. The catalysed reaction is diphosphate + H2O = 2 phosphate + H(+). The polypeptide is Probable manganese-dependent inorganic pyrophosphatase (Staphylococcus carnosus (strain TM300)).